Reading from the N-terminus, the 429-residue chain is Glutamate--tRNA ligase 1 (429 aa).

The 'HIGH' region signature appears at 6–16 (PSPTGDMHIGN). The 'KMSKS' region signature appears at 235 to 239 (KMSKR). Lys-238 is a binding site for ATP.

The protein belongs to the class-I aminoacyl-tRNA synthetase family. Glutamate--tRNA ligase type 1 subfamily. In terms of assembly, monomer.

It localises to the cytoplasm. The catalysed reaction is tRNA(Glu) + L-glutamate + ATP = L-glutamyl-tRNA(Glu) + AMP + diphosphate. Functionally, catalyzes the attachment of glutamate to tRNA(Glu) in a two-step reaction: glutamate is first activated by ATP to form Glu-AMP and then transferred to the acceptor end of tRNA(Glu). The protein is Glutamate--tRNA ligase 1 of Campylobacter fetus subsp. fetus (strain 82-40).